The chain runs to 425 residues: MPVDQSFNAPLSEVDPEIAAVLEQELGRQRGTLEMIASENFVPRAVLQSQGSVLTNKYAEGYPGRRYYGGCEFVDVAEQLAIDRAKSLFGAEFANVQPHSGATANAAVLAAIAQPGDTILGLELAHGGHLTHGMKLNFSGKLYDAAAYGVDPDTFLIDMDVVREKALEHRPQVIIAGWSAYPRHLDFAAFRSIADEVGAKLWVDMAHFAGLVAAGVHPSPVPYADVVSSTVHKTLAGPRSGVILSRDTALAKKLNSAVFPGQQGGPLMHVIAAKATAFKIAATEEFADRQRRTIQGAQILAERLVAADSTEAGVSVLTGGTDVHLVLADLRNSPIDGKQAEDALHEVGITVNRNSVPFDPRPPMVTSGVRIGTSALATRGFGETEFTEVADIIAETLKPGSDLAALRARVLTLTDGFPLYEGLTQ.

Residues Leu124 and 128–130 (GHL) contribute to the (6S)-5,6,7,8-tetrahydrofolate site. Lys233 bears the N6-(pyridoxal phosphate)lysine mark.

Belongs to the SHMT family. Homodimer. Requires pyridoxal 5'-phosphate as cofactor.

It localises to the cytoplasm. The catalysed reaction is (6R)-5,10-methylene-5,6,7,8-tetrahydrofolate + glycine + H2O = (6S)-5,6,7,8-tetrahydrofolate + L-serine. It functions in the pathway one-carbon metabolism; tetrahydrofolate interconversion. It participates in amino-acid biosynthesis; glycine biosynthesis; glycine from L-serine: step 1/1. Its function is as follows. Catalyzes the reversible interconversion of serine and glycine with tetrahydrofolate (THF) serving as the one-carbon carrier. This reaction serves as the major source of one-carbon groups required for the biosynthesis of purines, thymidylate, methionine, and other important biomolecules. Also exhibits THF-independent aldolase activity toward beta-hydroxyamino acids, producing glycine and aldehydes, via a retro-aldol mechanism. In Clavibacter sepedonicus (Clavibacter michiganensis subsp. sepedonicus), this protein is Serine hydroxymethyltransferase.